A 554-amino-acid chain; its full sequence is Formate--tetrahydrofolate ligase (554 aa).

64–71 (TPYGEGKT) is a binding site for ATP.

The protein belongs to the formate--tetrahydrofolate ligase family.

The catalysed reaction is (6S)-5,6,7,8-tetrahydrofolate + formate + ATP = (6R)-10-formyltetrahydrofolate + ADP + phosphate. Its pathway is one-carbon metabolism; tetrahydrofolate interconversion. The sequence is that of Formate--tetrahydrofolate ligase from Caldicellulosiruptor saccharolyticus (strain ATCC 43494 / DSM 8903 / Tp8T 6331).